The following is a 317-amino-acid chain: Ribosomal RNA small subunit methyltransferase H (317 aa).

Residues A37–H39, D56, F85, D106, and Q113 each bind S-adenosyl-L-methionine.

It belongs to the methyltransferase superfamily. RsmH family.

It is found in the cytoplasm. It carries out the reaction cytidine(1402) in 16S rRNA + S-adenosyl-L-methionine = N(4)-methylcytidine(1402) in 16S rRNA + S-adenosyl-L-homocysteine + H(+). Specifically methylates the N4 position of cytidine in position 1402 (C1402) of 16S rRNA. In Lactococcus lactis subsp. lactis (strain IL1403) (Streptococcus lactis), this protein is Ribosomal RNA small subunit methyltransferase H.